Here is a 397-residue protein sequence, read N- to C-terminus: Tryptophan synthase beta chain (397 aa).

The residue at position 87 (lysine 87) is an N6-(pyridoxal phosphate)lysine.

It belongs to the TrpB family. As to quaternary structure, tetramer of two alpha and two beta chains. The cofactor is pyridoxal 5'-phosphate.

It carries out the reaction (1S,2R)-1-C-(indol-3-yl)glycerol 3-phosphate + L-serine = D-glyceraldehyde 3-phosphate + L-tryptophan + H2O. It participates in amino-acid biosynthesis; L-tryptophan biosynthesis; L-tryptophan from chorismate: step 5/5. Its function is as follows. The beta subunit is responsible for the synthesis of L-tryptophan from indole and L-serine. This is Tryptophan synthase beta chain from Escherichia coli O45:K1 (strain S88 / ExPEC).